We begin with the raw amino-acid sequence, 297 residues long: Probable endonuclease 4 (297 aa).

Residues His-69, His-110, Glu-145, Asp-179, His-182, His-214, Asp-227, His-229, and Glu-259 each contribute to the Zn(2+) site.

Belongs to the AP endonuclease 2 family. It depends on Zn(2+) as a cofactor.

The enzyme catalyses Endonucleolytic cleavage to 5'-phosphooligonucleotide end-products.. Endonuclease IV plays a role in DNA repair. It cleaves phosphodiester bonds at apurinic or apyrimidinic (AP) sites, generating a 3'-hydroxyl group and a 5'-terminal sugar phosphate. This Listeria monocytogenes serotype 4b (strain CLIP80459) protein is Probable endonuclease 4.